We begin with the raw amino-acid sequence, 355 residues long: Uroporphyrinogen decarboxylase (355 aa).

Residues 27-31, Asp-78, Tyr-155, Ser-210, and His-328 contribute to the substrate site; that span reads RQAGR.

This sequence belongs to the uroporphyrinogen decarboxylase family. In terms of assembly, homodimer.

The protein localises to the cytoplasm. It catalyses the reaction uroporphyrinogen III + 4 H(+) = coproporphyrinogen III + 4 CO2. The protein operates within porphyrin-containing compound metabolism; protoporphyrin-IX biosynthesis; coproporphyrinogen-III from 5-aminolevulinate: step 4/4. Its function is as follows. Catalyzes the decarboxylation of four acetate groups of uroporphyrinogen-III to yield coproporphyrinogen-III. This Pseudomonas aeruginosa (strain UCBPP-PA14) protein is Uroporphyrinogen decarboxylase.